The following is a 60-amino-acid chain: Movement protein TGBp3 (60 aa).

The Lumenal portion of the chain corresponds to 1–6; it reads MHYIDW. A helical transmembrane segment spans residues 7-23; sequence VILLTFAAALIVCLTPK. Residues 24–60 lie on the Cytoplasmic side of the membrane; that stretch reads PEPCIITVSGASATVSNCPNPELLTDLVKALKPAKPV.

It belongs to the Tymovirales TGBp3 protein family.

Its subcellular location is the host endoplasmic reticulum membrane. Plays a role in viral cell-to-cell propagation, by facilitating genome transport to neighboring plant cells through plasmosdesmata. May induce the formation of granular vesicles derived from the Endoplasmic reticulum, which align on actin filaments. The sequence is that of Movement protein TGBp3 from Citrus (ICRSV).